The primary structure comprises 295 residues: Bifunctional protein FolD (295 aa).

Residues 166 to 168, Ser191, and Ile232 each bind NADP(+); that span reads GRS.

This sequence belongs to the tetrahydrofolate dehydrogenase/cyclohydrolase family. As to quaternary structure, homodimer.

It carries out the reaction (6R)-5,10-methylene-5,6,7,8-tetrahydrofolate + NADP(+) = (6R)-5,10-methenyltetrahydrofolate + NADPH. It catalyses the reaction (6R)-5,10-methenyltetrahydrofolate + H2O = (6R)-10-formyltetrahydrofolate + H(+). It participates in one-carbon metabolism; tetrahydrofolate interconversion. Its function is as follows. Catalyzes the oxidation of 5,10-methylenetetrahydrofolate to 5,10-methenyltetrahydrofolate and then the hydrolysis of 5,10-methenyltetrahydrofolate to 10-formyltetrahydrofolate. The polypeptide is Bifunctional protein FolD (Rhodopseudomonas palustris (strain ATCC BAA-98 / CGA009)).